The following is a 268-amino-acid chain: Putative carbamate hydrolase RutD (268 aa).

The 220-residue stretch at Val-24 to Gly-243 folds into the AB hydrolase-1 domain.

It belongs to the AB hydrolase superfamily. Hydrolase RutD family.

It catalyses the reaction carbamate + 2 H(+) = NH4(+) + CO2. Functionally, involved in pyrimidine catabolism. May facilitate the hydrolysis of carbamate, a reaction that can also occur spontaneously. In Caulobacter sp. (strain K31), this protein is Putative carbamate hydrolase RutD.